The following is a 94-amino-acid chain: Long neurotoxin LNTX8 (94 aa).

An N-terminal signal peptide occupies residues 1–21 (MKTLLLTLVVVTIMCLDLGYT). Cystine bridges form between Cys-24–Cys-43, Cys-36–Cys-64, Cys-49–Cys-53, Cys-68–Cys-79, and Cys-80–Cys-85.

This sequence belongs to the three-finger toxin family. Long-chain subfamily. Type II alpha-neurotoxin sub-subfamily. In terms of tissue distribution, expressed by the venom gland.

It is found in the secreted. Binds with high affinity to muscular (alpha-1/CHRNA1) and neuronal (alpha-7/CHRNA7) nicotinic acetylcholine receptor (nAChR) and inhibits acetylcholine from binding to the receptor, thereby impairing neuromuscular and neuronal transmission. The protein is Long neurotoxin LNTX8 of Ophiophagus hannah (King cobra).